Consider the following 147-residue polypeptide: Large ribosomal subunit protein bL9 (147 aa).

The protein belongs to the bacterial ribosomal protein bL9 family.

Its function is as follows. Binds to the 23S rRNA. The sequence is that of Large ribosomal subunit protein bL9 from Myxococcus xanthus (strain DK1622).